Here is a 420-residue protein sequence, read N- to C-terminus: MDGTDVTMLMREIGIRARAAAAELAFAEPSRKEEALNAAAEAMLARSDEILEANGRDLAFGAEKGLTPAMMDRLKLDAARIDGIVEGLRAVAGQPDPVGQVIAEWDRPSGLHIRRVRTPLGVVGVIYESRPNVTADAGALCLKSGNAVILRGGSESFHSSGAIHAALQDGLRQAGLPVDAIQRVPTRDRAAVAEMLRMVEHIDVIVPRGGKGLVGLVQAEARVPVFAHLEGICHVYADGDADLEKARRVVLNAKTRRTGICGSAECLLIDRAFLAKHGPVLIEDLLKAGVEVRAEGELAEVPGTVPAQPEDFGREFLDMIIAAKVVGGVDEAIAHIRRYGSSHTESILTENDATAERFFRRLDSAILMRNASTQFADGGEFGMGAEIGIATGKMHARGPVGAEQLTSFKYLVTGDGTIRA.

Belongs to the gamma-glutamyl phosphate reductase family.

It localises to the cytoplasm. The catalysed reaction is L-glutamate 5-semialdehyde + phosphate + NADP(+) = L-glutamyl 5-phosphate + NADPH + H(+). The protein operates within amino-acid biosynthesis; L-proline biosynthesis; L-glutamate 5-semialdehyde from L-glutamate: step 2/2. Functionally, catalyzes the NADPH-dependent reduction of L-glutamate 5-phosphate into L-glutamate 5-semialdehyde and phosphate. The product spontaneously undergoes cyclization to form 1-pyrroline-5-carboxylate. This chain is Gamma-glutamyl phosphate reductase, found in Cereibacter sphaeroides (strain KD131 / KCTC 12085) (Rhodobacter sphaeroides).